Here is a 192-residue protein sequence, read N- to C-terminus: Ion-translocating oxidoreductase complex subunit B (192 aa).

Residues 1-26 form a hydrophobic region; the sequence is MSTIWIAIAALSALALAFGLVLGYAS. One can recognise a 4Fe-4S domain in the interval 32–91; the sequence is ENDPIVEEVEAMLPQSQCGQCGYPGCRPYAEAVALNGENINKCGPGGEAMMLKLAEKLNV. [4Fe-4S] cluster contacts are provided by Cys-49, Cys-52, Cys-57, Cys-74, Cys-117, Cys-120, Cys-123, Cys-127, Cys-147, Cys-150, Cys-153, and Cys-157. 2 4Fe-4S ferredoxin-type domains span residues 108 to 137 and 138 to 167; these read QVAW…GSTK and AVHT…LRPI.

This sequence belongs to the 4Fe4S bacterial-type ferredoxin family. RnfB subfamily. The complex is composed of six subunits: RnfA, RnfB, RnfC, RnfD, RnfE and RnfG. Requires [4Fe-4S] cluster as cofactor.

Its subcellular location is the cell inner membrane. In terms of biological role, part of a membrane-bound complex that couples electron transfer with translocation of ions across the membrane. The chain is Ion-translocating oxidoreductase complex subunit B from Pectobacterium carotovorum subsp. carotovorum (strain PC1).